A 1538-amino-acid chain; its full sequence is Arf-GAP with Rho-GAP domain, ANK repeat and PH domain-containing protein 3 (1538 aa).

Residues 4–68 (PQDLDIAVWL…LRLLRAGSAE (65 aa)) enclose the SAM domain. 3 disordered regions span residues 72 to 97 (DSHLDNTMEPTPSPAPDAQPPKPVPK), 125 to 149 (SRNSECTQRSSPLLPSSSEQPSVPN), and 215 to 242 (ASDRRDGRGVCQERAEHRQDLETREDAG). Positions 82-97 (TPSPAPDAQPPKPVPK) are enriched in pro residues. Positions 216–241 (SDRRDGRGVCQERAEHRQDLETREDA) are enriched in basic and acidic residues. PH domains are found at residues 282–374 (VPLL…SCLK) and 389–478 (RPLR…EAVT). One can recognise an Arf-GAP domain in the interval 479-606 (ETLSDYEVAE…LFRKPHPRHP (128 aa)). 2 consecutive PH domains span residues 671-785 (ATYR…FSPL) and 795-901 (LLRM…AGGG). In terms of domain architecture, Rho-GAP spans 903 to 1084 (TGLQEQQMSR…ELIDGYISVF (182 aa)). In terms of domain architecture, Ras-associating spans 1113–1206 (GDLIMEVYIE…ASLLLRKVSM (94 aa)). A PH 5 domain is found at 1219 to 1321 (ESPRVGLLRC…WTTSILKAQH (103 aa)). Thr-1344 bears the Phosphothreonine mark. Residues Tyr-1399 and Tyr-1404 each carry the phosphotyrosine modification. Polar residues predominate over residues 1425–1439 (WSAKSDPSLTSQRSF). The disordered stretch occupies residues 1425 to 1538 (WSAKSDPSLT…SNPPSSQPLT (114 aa)). Phosphoserine is present on residues Ser-1438 and Ser-1474. 2 stretches are compositionally biased toward low complexity: residues 1476 to 1486 (EEQLLQELNNL) and 1494 to 1505 (ASCPESSSQPTS). A compositionally biased stretch (pro residues) spans 1506–1529 (PQAPSPTSLPTPTPSLPTQPPCTS).

As to quaternary structure, interacts (via SAM domain) with INPPL1/SHIP2. Tyrosine phosphorylated at a low basal level. PDGF treatment stimulates phosphorylation. Tyrosine phosphorylation is increased in cells that are in the process of becoming attached to a substrate and that start spreading and flattening.

It is found in the cytoplasm. Its subcellular location is the cell membrane. The protein resides in the cytoskeleton. The protein localises to the cell projection. It localises to the lamellipodium. It is found in the ruffle. In terms of biological role, phosphatidylinositol 3,4,5-trisphosphate-dependent GTPase-activating protein that modulates actin cytoskeleton remodeling by regulating ARF and RHO family members. Is activated by phosphatidylinositol 3,4,5-trisphosphate (PtdIns(3,4,5)P3) binding. Can be activated by phosphatidylinositol 3,4-bisphosphate (PtdIns(3,4,5)P2) binding, albeit with lower efficiency. Acts preferentially on ARF5 and on RHOA. The sequence is that of Arf-GAP with Rho-GAP domain, ANK repeat and PH domain-containing protein 3 (Arap3) from Mus musculus (Mouse).